Consider the following 349-residue polypeptide: uncharacterized protein (349 aa).

Residues 116-135 (HFSQTNPKSTPEPPCTSSSG) show a composition bias toward polar residues. The segment at 116–148 (HFSQTNPKSTPEPPCTSSSGAGDCHENLPADGY) is disordered.

This is an uncharacterized protein from Caenorhabditis elegans.